A 442-amino-acid chain; its full sequence is Putative arsenical pump membrane protein (442 aa).

The next 11 helical transmembrane spans lie at 22-42 (IPATFGALMVLLCGSVSLADL), 56-76 (ILATMIMAIALESFGFFYWVA), 85-105 (GSGIKLFWLTNLLCFLMTIFL), 107-127 (NDGSILITTPILLLVLKYLGL), 136-156 (LLSGVLIATASSAPIGVSNIV), 174-194 (MMFVPSMMGLIFMTCLLFMFF), 250-270 (LFAASYTGISVPLVAVIGSFI), 294-314 (IFIFAFTMYVLIYGLHNIGFT), 328-347 (SLAHATFASGISTSVFSNLF), 378-398 (IIGSDIGSLLLPMGTLATLIW), and 419-439 (IIIIPLTVLFTLTCLYFWISW).

This sequence belongs to the ArsB family.

Its subcellular location is the cell membrane. The sequence is that of Putative arsenical pump membrane protein (ywrK) from Bacillus subtilis (strain 168).